Here is a 215-residue protein sequence, read N- to C-terminus: Guanylate kinase (215 aa).

The region spanning 11-189 is the Guanylate kinase-like domain; the sequence is GNVFMVVAPS…ALTELVQIIS (179 aa). 18 to 25 contributes to the ATP binding site; the sequence is APSGAGKS.

Belongs to the guanylate kinase family.

It localises to the cytoplasm. The catalysed reaction is GMP + ATP = GDP + ADP. In terms of biological role, essential for recycling GMP and indirectly, cGMP. This chain is Guanylate kinase, found in Bordetella bronchiseptica (strain ATCC BAA-588 / NCTC 13252 / RB50) (Alcaligenes bronchisepticus).